A 318-amino-acid polypeptide reads, in one-letter code: Porphobilinogen deaminase (318 aa).

Cys248 bears the S-(dipyrrolylmethanemethyl)cysteine mark.

It belongs to the HMBS family. As to quaternary structure, monomer. Dipyrromethane is required as a cofactor.

The enzyme catalyses 4 porphobilinogen + H2O = hydroxymethylbilane + 4 NH4(+). Its pathway is porphyrin-containing compound metabolism; protoporphyrin-IX biosynthesis; coproporphyrinogen-III from 5-aminolevulinate: step 2/4. In terms of biological role, tetrapolymerization of the monopyrrole PBG into the hydroxymethylbilane pre-uroporphyrinogen in several discrete steps. The protein is Porphobilinogen deaminase of Caulobacter sp. (strain K31).